The sequence spans 930 residues: Translation initiation factor IF-2 (930 aa).

A compositionally biased stretch (low complexity) spans 50–67 (FKPAAAPKVEAKPAAPKV). Disordered regions lie at residues 50–195 (FKPA…PRID) and 260–346 (EVVP…HELP). Basic and acidic residues-rich tracts occupy residues 68–90 (SAEK…EAKP) and 110–125 (FKAE…AERR). Residues 129–141 (KGNNRDQQQNGNR) show a composition bias toward low complexity. 2 stretches are compositionally biased toward basic and acidic residues: residues 157-167 (RDNRRFNDQAK) and 262-295 (VPEK…DGPR). Residues 309 to 318 (NQKNSNWNNN) are compositionally biased toward low complexity. Positions 337–346 (VTERKFHELP) are enriched in basic and acidic residues. The 168-residue stretch at 432–599 (ERPPVVTIMG…TVLLVAEIQE (168 aa)) folds into the tr-type G domain. The G1 stretch occupies residues 441-448 (GHVDHGKT). Position 441–448 (441–448 (GHVDHGKT)) interacts with GTP. Residues 466-470 (GITQH) are G2. Residues 487 to 490 (DTPG) form a G3 region. GTP contacts are provided by residues 487 to 491 (DTPGH) and 541 to 544 (NKID). The tract at residues 541-544 (NKID) is G4. The segment at 577 to 579 (SAK) is G5.

The protein belongs to the TRAFAC class translation factor GTPase superfamily. Classic translation factor GTPase family. IF-2 subfamily.

It is found in the cytoplasm. Its function is as follows. One of the essential components for the initiation of protein synthesis. Protects formylmethionyl-tRNA from spontaneous hydrolysis and promotes its binding to the 30S ribosomal subunits. Also involved in the hydrolysis of GTP during the formation of the 70S ribosomal complex. In Streptococcus pneumoniae (strain ATCC BAA-255 / R6), this protein is Translation initiation factor IF-2.